A 196-amino-acid polypeptide reads, in one-letter code: dCTP deaminase (196 aa).

DCTP is bound by residues 113-118 (RSSLAR), D131, 139-141 (VLE), Y174, K181, and Q185. The Proton donor/acceptor role is filled by E141.

This sequence belongs to the dCTP deaminase family. In terms of assembly, homotrimer.

It carries out the reaction dCTP + H2O + H(+) = dUTP + NH4(+). Its pathway is pyrimidine metabolism; dUMP biosynthesis; dUMP from dCTP (dUTP route): step 1/2. Its function is as follows. Catalyzes the deamination of dCTP to dUTP. The sequence is that of dCTP deaminase from Wigglesworthia glossinidia brevipalpis.